Consider the following 352-residue polypeptide: Putative pectinesterase 11 (352 aa).

A helical transmembrane segment spans residues Ala-13 to Ala-35. Asn-76 is a glycosylation site (N-linked (GlcNAc...) asparagine). The active-site Proton donor is Asp-175. Asp-196 functions as the Nucleophile in the catalytic mechanism. Asn-218 is a glycosylation site (N-linked (GlcNAc...) asparagine). Substrate contacts are provided by Arg-252 and Trp-254. The interval Leu-332–Asn-352 is disordered. The segment covering Pro-343 to Asn-352 has biased composition (polar residues).

Belongs to the pectinesterase family.

It is found in the membrane. It carries out the reaction [(1-&gt;4)-alpha-D-galacturonosyl methyl ester](n) + n H2O = [(1-&gt;4)-alpha-D-galacturonosyl](n) + n methanol + n H(+). It functions in the pathway glycan metabolism; pectin degradation; 2-dehydro-3-deoxy-D-gluconate from pectin: step 1/5. Its function is as follows. Acts in the modification of cell walls via demethylesterification of cell wall pectin. This chain is Putative pectinesterase 11 (PME11), found in Arabidopsis thaliana (Mouse-ear cress).